We begin with the raw amino-acid sequence, 421 residues long: Testin (421 aa).

A PET domain is found at 92–199; the sequence is MILTNPVAAK…GDVKLPRDMN (108 aa). Disordered regions lie at residues 133-164 and 193-213; these read EKQPVAGSEGAQYRKKQLAKQLPAHDQDPSKC and KLPRDMNTQGPNRMYIPGGDR. Residues 155–164 are compositionally biased toward basic and acidic residues; it reads PAHDQDPSKC. 3 consecutive LIM zinc-binding domains span residues 234-297, 299-359, and 362-421; these read YSCY…CDSE, PRCA…NHAV, and QGCH…KMMS.

The protein belongs to the prickle / espinas / testin family. In terms of assembly, interacts via LIM domain 1 with ZYX. Interacts (via LIM domain 3) with ENAH and VASP. Interacts with ALKBH4, talin, actin, alpha-actinin, GRIP1 and PXN. Interacts (via LIM domain 2) with ACTL7A (via N-terminus). Heterodimer with ACTL7A; the heterodimer interacts with ENAH to form a heterotrimer.

The protein resides in the cytoplasm. The protein localises to the cell junction. It localises to the focal adhesion. Functionally, scaffold protein that may play a role in cell adhesion, cell spreading and in the reorganization of the actin cytoskeleton. Plays a role in the regulation of cell proliferation. May act as a tumor suppressor. The sequence is that of Testin (TES) from Muntiacus muntjak (Barking deer).